The sequence spans 581 residues: Proline--tRNA ligase (581 aa).

It belongs to the class-II aminoacyl-tRNA synthetase family. ProS type 1 subfamily. As to quaternary structure, homodimer.

Its subcellular location is the cytoplasm. It carries out the reaction tRNA(Pro) + L-proline + ATP = L-prolyl-tRNA(Pro) + AMP + diphosphate. In terms of biological role, catalyzes the attachment of proline to tRNA(Pro) in a two-step reaction: proline is first activated by ATP to form Pro-AMP and then transferred to the acceptor end of tRNA(Pro). As ProRS can inadvertently accommodate and process non-cognate amino acids such as alanine and cysteine, to avoid such errors it has two additional distinct editing activities against alanine. One activity is designated as 'pretransfer' editing and involves the tRNA(Pro)-independent hydrolysis of activated Ala-AMP. The other activity is designated 'posttransfer' editing and involves deacylation of mischarged Ala-tRNA(Pro). The misacylated Cys-tRNA(Pro) is not edited by ProRS. This chain is Proline--tRNA ligase, found in Paracidovorax citrulli (strain AAC00-1) (Acidovorax citrulli).